A 348-amino-acid polypeptide reads, in one-letter code: RNA 3'-terminal phosphate cyclase (348 aa).

ATP-binding positions include Gln-102 and 285–288 (HMGD). His-311 functions as the Tele-AMP-histidine intermediate in the catalytic mechanism.

The protein belongs to the RNA 3'-terminal cyclase family. Type 1 subfamily.

The protein localises to the cytoplasm. The enzyme catalyses a 3'-end 3'-phospho-ribonucleotide-RNA + ATP = a 3'-end 2',3'-cyclophospho-ribonucleotide-RNA + AMP + diphosphate. Functionally, catalyzes the conversion of 3'-phosphate to a 2',3'-cyclic phosphodiester at the end of RNA. The mechanism of action of the enzyme occurs in 3 steps: (A) adenylation of the enzyme by ATP; (B) transfer of adenylate to an RNA-N3'P to produce RNA-N3'PP5'A; (C) and attack of the adjacent 2'-hydroxyl on the 3'-phosphorus in the diester linkage to produce the cyclic end product. The biological role of this enzyme is unknown but it is likely to function in some aspects of cellular RNA processing. This chain is RNA 3'-terminal phosphate cyclase, found in Korarchaeum cryptofilum (strain OPF8).